We begin with the raw amino-acid sequence, 306 residues long: Glutaminase (306 aa).

Residues Ser64, Asn115, Glu159, Asn166, Tyr190, Tyr242, and Val260 each coordinate substrate.

The protein belongs to the glutaminase family. As to quaternary structure, homotetramer.

It carries out the reaction L-glutamine + H2O = L-glutamate + NH4(+). In Vibrio cholerae serotype O1 (strain ATCC 39315 / El Tor Inaba N16961), this protein is Glutaminase.